The primary structure comprises 742 residues: Phosphoribosylformylglycinamidine synthase subunit PurL (742 aa).

Residue His-53 is part of the active site. ATP contacts are provided by Tyr-56 and Lys-95. Glu-97 provides a ligand contact to Mg(2+). Residues 98-101 (SHNH) and Arg-120 each bind substrate. The active-site Proton acceptor is the His-99. Residue Asp-121 participates in Mg(2+) binding. Residue Gln-245 coordinates substrate. Mg(2+) is bound at residue Asp-275. Residue 319 to 321 (ESQ) coordinates substrate. Positions 502 and 539 each coordinate ATP. Asn-540 contacts Mg(2+). A substrate-binding site is contributed by Ser-542.

It belongs to the FGAMS family. Monomer. Part of the FGAM synthase complex composed of 1 PurL, 1 PurQ and 2 PurS subunits.

Its subcellular location is the cytoplasm. It carries out the reaction N(2)-formyl-N(1)-(5-phospho-beta-D-ribosyl)glycinamide + L-glutamine + ATP + H2O = 2-formamido-N(1)-(5-O-phospho-beta-D-ribosyl)acetamidine + L-glutamate + ADP + phosphate + H(+). Its pathway is purine metabolism; IMP biosynthesis via de novo pathway; 5-amino-1-(5-phospho-D-ribosyl)imidazole from N(2)-formyl-N(1)-(5-phospho-D-ribosyl)glycinamide: step 1/2. In terms of biological role, part of the phosphoribosylformylglycinamidine synthase complex involved in the purines biosynthetic pathway. Catalyzes the ATP-dependent conversion of formylglycinamide ribonucleotide (FGAR) and glutamine to yield formylglycinamidine ribonucleotide (FGAM) and glutamate. The FGAM synthase complex is composed of three subunits. PurQ produces an ammonia molecule by converting glutamine to glutamate. PurL transfers the ammonia molecule to FGAR to form FGAM in an ATP-dependent manner. PurS interacts with PurQ and PurL and is thought to assist in the transfer of the ammonia molecule from PurQ to PurL. The protein is Phosphoribosylformylglycinamidine synthase subunit PurL of Lactobacillus acidophilus (strain ATCC 700396 / NCK56 / N2 / NCFM).